The primary structure comprises 156 residues: uncharacterized protein (156 aa).

The next 5 helical transmembrane spans lie at 7–29 (AQISVVLSTIIIMTYAFLSSYFL), 42–64 (YFALSNLLSLSLPFVCAWFPYLF), 69–88 (AVTGSALSAFGLFLFFAITS), 98–120 (AAIWVIYFFWLIGAALAGVYPAL), and 133–155 (ALVLSALFTVVVSFIIGFLISRI).

The protein localises to the cell membrane. This is an uncharacterized protein from Pasteurella multocida (strain Pm70).